A 345-amino-acid polypeptide reads, in one-letter code: MFSSLYPLARASLFKMDAEDAHHLTLRMLGAAGRTGLARALSSRVPDAPRTVMGLTFRNPVGLAAGLDKDGAAIDGFAALGFGFIEVGTVTPRAQPGNPRPRMFRLPEAGAIINRMGFNNSGVDQFVKNVQAARYRGVLGLNIGKNADTPIERAADDYLYCLERVYPFASYVTINISSPNTKNLRQLQGAGELDALLAALKNKQQRLADLHGKLVPLALKIAPDLDDEQVKDIAATLLRHNIEGVIATNTTLSRDAVKGLPHADEAGGLSGRPVFDASNAVIRKLHAELGDAVPIIGVGGIFSGDDARAKLAAGASLVQLYTGFIYRGPALVAECVKAIARGQTR.

FMN-binding positions include 65–69 (AGLDK) and T89. Residue K69 coordinates substrate. Position 114-118 (114-118 (NRMGF)) interacts with substrate. FMN-binding residues include N142 and N175. Residue N175 participates in substrate binding. Catalysis depends on S178, which acts as the Nucleophile. Position 180 (N180) interacts with substrate. K220 and T248 together coordinate FMN. 249–250 (NT) lines the substrate pocket. FMN contacts are provided by residues G271, G300, and 321–322 (YT).

It belongs to the dihydroorotate dehydrogenase family. Type 2 subfamily. Monomer. The cofactor is FMN.

It localises to the cell membrane. The enzyme catalyses (S)-dihydroorotate + a quinone = orotate + a quinol. It functions in the pathway pyrimidine metabolism; UMP biosynthesis via de novo pathway; orotate from (S)-dihydroorotate (quinone route): step 1/1. Its function is as follows. Catalyzes the conversion of dihydroorotate to orotate with quinone as electron acceptor. The polypeptide is Dihydroorotate dehydrogenase (quinone) (Burkholderia thailandensis (strain ATCC 700388 / DSM 13276 / CCUG 48851 / CIP 106301 / E264)).